The following is a 530-amino-acid chain: Lysine--tRNA ligase (530 aa).

Residues 28-36 carry the 'HIGH' region motif; sequence PSGHIHVGN. The 'KMSKS' region signature appears at 278-282; sequence PMSSS.

It belongs to the class-I aminoacyl-tRNA synthetase family.

Its subcellular location is the cytoplasm. It carries out the reaction tRNA(Lys) + L-lysine + ATP = L-lysyl-tRNA(Lys) + AMP + diphosphate. The protein is Lysine--tRNA ligase (lysS) of Methanocaldococcus jannaschii (strain ATCC 43067 / DSM 2661 / JAL-1 / JCM 10045 / NBRC 100440) (Methanococcus jannaschii).